A 190-amino-acid chain; its full sequence is Elongation factor P (190 aa).

Belongs to the elongation factor P family.

It is found in the cytoplasm. It participates in protein biosynthesis; polypeptide chain elongation. Involved in peptide bond synthesis. Stimulates efficient translation and peptide-bond synthesis on native or reconstituted 70S ribosomes in vitro. Probably functions indirectly by altering the affinity of the ribosome for aminoacyl-tRNA, thus increasing their reactivity as acceptors for peptidyl transferase. This chain is Elongation factor P (efp), found in Mycoplasma pneumoniae (strain ATCC 29342 / M129 / Subtype 1) (Mycoplasmoides pneumoniae).